The following is a 185-amino-acid chain: Ubiquitin-conjugating enzyme E2 2 (185 aa).

The region spanning 4–150 (PSKKRLIRDF…VKATVEASWL (147 aa)) is the UBC core domain. The active-site Glycyl thioester intermediate is Cys88. Residues 149–173 (WLDDGEMPESIEEDDEAEAEAEAEA) show a composition bias toward acidic residues. Positions 149-185 (WLDDGEMPESIEEDDEAEAEAEAEATVDRSAPQTASA) are disordered.

The protein belongs to the ubiquitin-conjugating enzyme family.

Its subcellular location is the cytoplasm. The protein localises to the nucleus. The catalysed reaction is S-ubiquitinyl-[E1 ubiquitin-activating enzyme]-L-cysteine + [E2 ubiquitin-conjugating enzyme]-L-cysteine = [E1 ubiquitin-activating enzyme]-L-cysteine + S-ubiquitinyl-[E2 ubiquitin-conjugating enzyme]-L-cysteine.. The protein operates within protein modification; protein ubiquitination. In terms of biological role, catalyzes the covalent attachment of ubiquitin to other proteins. Plays a role in transcription regulation by catalyzing the monoubiquitination of histone H2B to form H2BK123ub1. H2BK123ub1 gives a specific tag for epigenetic transcriptional activation and is also a prerequisite for H3K4me and H3K79me formation. Also involved in postreplication repair of UV-damaged DNA, in N-end rule-dependent protein degradation and in sporulation. The chain is Ubiquitin-conjugating enzyme E2 2 (UBC2) from Mycosarcoma maydis (Corn smut fungus).